The sequence spans 701 residues: 1,4-alpha-glucan branching enzyme GlgB (701 aa).

The Nucleophile role is filled by Asp-381. Glu-434 (proton donor) is an active-site residue.

This sequence belongs to the glycosyl hydrolase 13 family. GlgB subfamily. In terms of assembly, monomer.

The catalysed reaction is Transfers a segment of a (1-&gt;4)-alpha-D-glucan chain to a primary hydroxy group in a similar glucan chain.. It participates in glycan biosynthesis; glycogen biosynthesis. Functionally, catalyzes the formation of the alpha-1,6-glucosidic linkages in glycogen by scission of a 1,4-alpha-linked oligosaccharide from growing alpha-1,4-glucan chains and the subsequent attachment of the oligosaccharide to the alpha-1,6 position. This is 1,4-alpha-glucan branching enzyme GlgB from Jannaschia sp. (strain CCS1).